The sequence spans 463 residues: Cysteine--tRNA ligase (463 aa).

Cys33 lines the Zn(2+) pocket. The short motif at 35–45 (PTVYDFAHIGN) is the 'HIGH' region element. Zn(2+) is bound by residues Cys221, His246, and Glu250. A 'KMSKS' region motif is present at residues 279–283 (KMSKS). Residue Lys282 participates in ATP binding.

It belongs to the class-I aminoacyl-tRNA synthetase family. Monomer. The cofactor is Zn(2+).

Its subcellular location is the cytoplasm. It catalyses the reaction tRNA(Cys) + L-cysteine + ATP = L-cysteinyl-tRNA(Cys) + AMP + diphosphate. The sequence is that of Cysteine--tRNA ligase from Rhizobium rhizogenes (strain K84 / ATCC BAA-868) (Agrobacterium radiobacter).